The primary structure comprises 585 residues: Zinc finger protein C11D3.17 (585 aa).

2 consecutive C2H2-type zinc fingers follow at residues 31 to 53 (FPCDQCAKRFTRHENLTRHKACH) and 59 to 82 (IPCPYCEIKCKRKDLLKRHIQRFH). Thr-553 carries the post-translational modification Phosphothreonine.

The protein resides in the nucleus. This Schizosaccharomyces pombe (strain 972 / ATCC 24843) (Fission yeast) protein is Zinc finger protein C11D3.17.